The primary structure comprises 236 residues: Putative glutamine amidotransferase-like protein YvdE (236 aa).

In terms of domain architecture, Glutamine amidotransferase type-1 spans Ser-17–Ile-236.

The polypeptide is Putative glutamine amidotransferase-like protein YvdE (yvdE) (Lactococcus lactis subsp. lactis (strain IL1403) (Streptococcus lactis)).